The following is a 470-amino-acid chain: 3-isopropylmalate dehydratase large subunit (470 aa).

Cysteine 351, cysteine 411, and cysteine 414 together coordinate [4Fe-4S] cluster.

Belongs to the aconitase/IPM isomerase family. LeuC type 1 subfamily. Heterodimer of LeuC and LeuD. It depends on [4Fe-4S] cluster as a cofactor.

It catalyses the reaction (2R,3S)-3-isopropylmalate = (2S)-2-isopropylmalate. The protein operates within amino-acid biosynthesis; L-leucine biosynthesis; L-leucine from 3-methyl-2-oxobutanoate: step 2/4. Functionally, catalyzes the isomerization between 2-isopropylmalate and 3-isopropylmalate, via the formation of 2-isopropylmaleate. This Rhodopseudomonas palustris (strain BisB5) protein is 3-isopropylmalate dehydratase large subunit.